The following is a 187-amino-acid chain: Ion-translocating oxidoreductase complex subunit B (187 aa).

The hydrophobic stretch occupies residues 1–26 (MTHILFAVLVLALLALAFGIILGFAA). The 4Fe-4S domain maps to 32-90 (EADPIVDQLDALLPQTQCGQCGYPGCKPYAEALANGDQINKCVPGGDATMRKIADLMGV). [4Fe-4S] cluster-binding residues include Cys-49, Cys-52, Cys-57, Cys-73, Cys-115, Cys-118, Cys-121, Cys-125, Cys-145, Cys-148, Cys-151, and Cys-155. 4Fe-4S ferredoxin-type domains lie at 106–135 (KVAF…GATK) and 136–165 (AMHT…MIPV).

This sequence belongs to the 4Fe4S bacterial-type ferredoxin family. RnfB subfamily. As to quaternary structure, the complex is composed of six subunits: RnfA, RnfB, RnfC, RnfD, RnfE and RnfG. The cofactor is [4Fe-4S] cluster.

It is found in the cell inner membrane. Part of a membrane-bound complex that couples electron transfer with translocation of ions across the membrane. In Aeromonas hydrophila subsp. hydrophila (strain ATCC 7966 / DSM 30187 / BCRC 13018 / CCUG 14551 / JCM 1027 / KCTC 2358 / NCIMB 9240 / NCTC 8049), this protein is Ion-translocating oxidoreductase complex subunit B.